The chain runs to 538 residues: Probable inorganic phosphate transporter 1-4 (538 aa).

Topologically, residues 1 to 23 (MAGELKVLNALDSAKTQWYHFTA) are cytoplasmic. The chain crosses the membrane as a helical span at residues 24–44 (IVIAGMGFFTDAYDLFSISLV). Topologically, residues 45-69 (TKLLGRIYYFNPASKSPGSLPPNVS) are extracellular. Residues 70–90 (AAVNGVAFCGTLAGQLFFGWL) traverse the membrane as a helical segment. Over 91 to 98 (GDKMGRKK) the chain is Cytoplasmic. The chain crosses the membrane as a helical span at residues 99–119 (VYGMTLMLMVICCLASGLSFG). Residues 120-123 (SSAK) lie on the Extracellular side of the membrane. The helical transmembrane segment at 124 to 144 (GVMATLCFFRFWLGFGIGGDY) threads the bilayer. Over 145–163 (PLSATIMSEYANKRTRGAF) the chain is Cytoplasmic. Residues 164 to 184 (IAAVFAMQGFGNLTGGIVAII) form a helical membrane-spanning segment. Topologically, residues 185 to 210 (VSAAFKSRFDAPAYRDDRTGSTVPQA) are extracellular. The chain crosses the membrane as a helical span at residues 211–231 (DYAWRIVLMFGAIPALLTYYW). Over 232–294 (RMKMPETARY…RQFLRRHGRH (63 aa)) the chain is Cytoplasmic. A helical membrane pass occupies residues 295–315 (LLGTTVCWFVLDIAFYSSNLF). The Extracellular portion of the chain corresponds to 316-346 (QKDIYTAVQWLPKADTMSALEEMFKISRAQT). The helical transmembrane segment at 347-367 (LVALCGTIPGYWFTVFFIDII) threads the bilayer. The Cytoplasmic portion of the chain corresponds to 368 to 369 (GR). A helical transmembrane segment spans residues 370 to 390 (FVIQLGGFFFMTAFMLGLAVP). The Extracellular portion of the chain corresponds to 391–396 (YHHWTT). The helical transmembrane segment at 397 to 417 (PGNHIGFVVMYAFTFFFANFG) threads the bilayer. At 418–440 (PNSTTFIVPAEIFPARLRSTCHG) the chain is on the cytoplasmic side. A helical membrane pass occupies residues 441–461 (ISAAAGKAGAIVGSFGFLYAA). Over 462-481 (QSTDASKTDAGYPPGIGVRN) the chain is Extracellular. Residues 482-502 (SLFFLAGCNVIGFFFTFLVPE) form a helical membrane-spanning segment. Residues 503-538 (SKGKSLEELSGENEDDDDVPEAPATADHRTAPAPPA) lie on the Cytoplasmic side of the membrane. The segment at 507–538 (SLEELSGENEDDDDVPEAPATADHRTAPAPPA) is disordered. Positions 511 to 522 (LSGENEDDDDVP) are enriched in acidic residues.

It belongs to the major facilitator superfamily. Phosphate:H(+) symporter (TC 2.A.1.9) family. In terms of tissue distribution, expressed at low levels in roots.

The protein localises to the membrane. High-affinity transporter for external inorganic phosphate. The chain is Probable inorganic phosphate transporter 1-4 (PHT1-4) from Oryza sativa subsp. japonica (Rice).